Consider the following 316-residue polypeptide: MKTIHITHPHHLIKEEQAKSVMALGYFDGVHLGHQKVIGTAKQIAEEKGLTLAVMTFHPHPSHVLGRDKEPKDLITPLEDKINQIEQLGTEVLYVVKFNEVFASLSPKQFIDQYIIGLNVQHAVAGFDFTYGKYGKGTMKTMPDDLDGKAGCTMVEKLTEQDKKISSSYIRTALQNGDVELANVLLGQPYFIKGIVIHGDKRGRTIGFPTANVGLNNSYIVPPTGVYAVKAEVNGEVYNGVCNIGYKPTFYEKRPEQPSIEVNLFDFNQEVYGAAIKIEWYKRIRSERKFNGIKELTEQIEKDKQEAIRYFSNLRK.

Belongs to the RibF family.

The enzyme catalyses riboflavin + ATP = FMN + ADP + H(+). It carries out the reaction FMN + ATP + H(+) = FAD + diphosphate. It functions in the pathway cofactor biosynthesis; FAD biosynthesis; FAD from FMN: step 1/1. The protein operates within cofactor biosynthesis; FMN biosynthesis; FMN from riboflavin (ATP route): step 1/1. In terms of biological role, catalyzes the phosphorylation of riboflavin to FMN followed by the adenylation of FMN to FAD. The protein is Bifunctional riboflavin kinase/FMN adenylyltransferase (ribC) of Bacillus subtilis (strain 168).